Consider the following 420-residue polypeptide: Dynein axonemal assembly factor 4 (420 aa).

The CS domain maps to 3-87 (LQVSDYSWQQ…KEAAMWETLS (85 aa)). The mediates interaction with ESR1 and STUB1 stretch occupies residues 7–103 (DYSWQQTKTA…EMMQRIREKS (97 aa)). TPR repeat units lie at residues 290 to 323 (PEWL…NNKM), 324 to 357 (PLLY…LMPP), and 366 to 399 (MKAH…DPSN).

Interacts with ZMYND10. Interacts with STUB1. Interacts with ESR1 and ESR2. Interacts with DNAAF2. Interacts with CCT3, CCT4, CCT5 and CCT8. Interacts with DNAAF6/PIH1D3.

The protein resides in the nucleus. It localises to the cytoplasm. Its subcellular location is the cell projection. It is found in the neuron projection. The protein localises to the dynein axonemal particle. Involved in neuronal migration during development of the cerebral neocortex. May regulate the stability and proteasomal degradation of the estrogen receptors that play an important role in neuronal differentiation, survival and plasticity. Axonemal dynein assembly factor required for ciliary motility. The sequence is that of Dynein axonemal assembly factor 4 from Pan troglodytes (Chimpanzee).